The chain runs to 397 residues: Meiotic driver wtf28 (397 aa).

Disordered stretches follow at residues 1–41 (MKNK…GNTL) and 65–102 (NWNKSTTPPDYDENRLPITDEGNNPPNTHRENHSSGTA). The span at 11–29 (SMDELSTKNDNEIDLEKGP) shows a compositional bias: basic and acidic residues. 9 helical membrane passes run 108–128 (FLIKLIISFTPIFVLNVPAVC), 145–165 (WVYFGVWCAICLMSFISLWCF), 175–195 (VTVIFLAQCVKVTVIFLAQCV), 205–225 (CIKVTVISLAKCVKVIAVGLY), 230–250 (DLVVTIWLAWVVICFILFGCV), 266–286 (SSISAALFFILLLVCIPIWTL), 290–310 (LFGLFQVLGVQSCVVIVTKGL), 320–340 (ATGYEIEASSLFVIGNFLFFY), and 357–377 (NGIASFLGGIANAFGGIANAI).

The protein belongs to the WTF family. As to quaternary structure, homomer. Forms protein aggregates. The two isoforms can interact with each other and with themselves. High sequence similarity is required for their interaction.

Its subcellular location is the spore membrane. The protein localises to the vacuole membrane. It is found in the ascus epiplasm. The protein resides in the cytoplasm. It localises to the endoplasmic reticulum membrane. Promotes unequal transmission of alleles from the parental zygote to progeny spores by acting as poison/antidote system where the poison and antidote proteins are produced from the same locus; the poison component is trans-acting and targets all spores within an ascus whereas the antidote component is spore-specific, leading to poisoning of all progeny that do not inherit the allele. In terms of biological role, localizes isoform 2 to the vacuole thereby facilitating its degradation. Its function is as follows. Forms toxic aggregates that disrupt spore maturation. In Schizosaccharomyces kambucha (Fission yeast), this protein is Meiotic driver wtf28.